We begin with the raw amino-acid sequence, 220 residues long: Chaperone protein TorD (220 aa).

The protein belongs to the TorD/DmsD family. TorD subfamily.

It localises to the cytoplasm. Its function is as follows. Involved in the biogenesis of TorA. Acts on TorA before the insertion of the molybdenum cofactor and, as a result, probably favors a conformation of the apoenzyme that is competent for acquiring the cofactor. This chain is Chaperone protein TorD, found in Vibrio cholerae serotype O1 (strain ATCC 39315 / El Tor Inaba N16961).